The following is a 218-amino-acid chain: Probable transaldolase (218 aa).

The active-site Schiff-base intermediate with substrate is the Lys-83.

Belongs to the transaldolase family. Type 3B subfamily.

The protein localises to the cytoplasm. The enzyme catalyses D-sedoheptulose 7-phosphate + D-glyceraldehyde 3-phosphate = D-erythrose 4-phosphate + beta-D-fructose 6-phosphate. Its pathway is carbohydrate degradation; pentose phosphate pathway; D-glyceraldehyde 3-phosphate and beta-D-fructose 6-phosphate from D-ribose 5-phosphate and D-xylulose 5-phosphate (non-oxidative stage): step 2/3. Transaldolase is important for the balance of metabolites in the pentose-phosphate pathway. This is Probable transaldolase (tal) from Mesorhizobium japonicum (strain LMG 29417 / CECT 9101 / MAFF 303099) (Mesorhizobium loti (strain MAFF 303099)).